We begin with the raw amino-acid sequence, 285 residues long: Urease accessory protein UreD (285 aa).

The protein belongs to the UreD family. In terms of assembly, ureD, UreF and UreG form a complex that acts as a GTP-hydrolysis-dependent molecular chaperone, activating the urease apoprotein by helping to assemble the nickel containing metallocenter of UreC. The UreE protein probably delivers the nickel.

The protein localises to the cytoplasm. In terms of biological role, required for maturation of urease via the functional incorporation of the urease nickel metallocenter. This chain is Urease accessory protein UreD, found in Cytophaga hutchinsonii (strain ATCC 33406 / DSM 1761 / CIP 103989 / NBRC 15051 / NCIMB 9469 / D465).